A 495-amino-acid chain; its full sequence is Cytochrome P450 2B15 (495 aa).

At Ser-129 the chain carries Phosphoserine; by PKA. Cys-437 is a binding site for heme.

It belongs to the cytochrome P450 family. The cofactor is heme.

It is found in the endoplasmic reticulum membrane. The protein resides in the microsome membrane. It carries out the reaction an organic molecule + reduced [NADPH--hemoprotein reductase] + O2 = an alcohol + oxidized [NADPH--hemoprotein reductase] + H2O + H(+). Cytochromes P450 are a group of heme-thiolate monooxygenases. In liver microsomes, this enzyme is involved in an NADPH-dependent electron transport pathway. It oxidizes a variety of structurally unrelated compounds, including steroids, fatty acids, and xenobiotics. This chain is Cytochrome P450 2B15 (Cyp2b15), found in Rattus norvegicus (Rat).